We begin with the raw amino-acid sequence, 146 residues long: Histone H2A.1 (146 aa).

Methionine 1 is subject to N-acetylmethionine. Residues 1–24 (MDATKTTKGAGGRKGGPRKKSVTK) form a disordered region. The short motif at 142–145 (SPKK) is the SPKK motif element.

It belongs to the histone H2A family. In terms of assembly, the nucleosome is a histone octamer containing two molecules each of H2A, H2B, H3 and H4 assembled in one H3-H4 heterotetramer and two H2A-H2B heterodimers. The octamer wraps approximately 147 bp of DNA. As to expression, high expression in meristematic tissues, in cells of the root pericycle and in shoot cortical cells undergoing endoduplication of their DNA.

Its subcellular location is the nucleus. It is found in the chromosome. In terms of biological role, core component of nucleosome. Nucleosomes wrap and compact DNA into chromatin, limiting DNA accessibility to the cellular machineries which require DNA as a template. Histones thereby play a central role in transcription regulation, DNA repair, DNA replication and chromosomal stability. DNA accessibility is regulated via a complex set of post-translational modifications of histones, also called histone code, and nucleosome remodeling. The sequence is that of Histone H2A.1 from Solanum lycopersicum (Tomato).